Consider the following 300-residue polypeptide: Formamidopyrimidine-DNA glycosylase (300 aa).

Pro-2 acts as the Schiff-base intermediate with DNA in catalysis. Glu-3 serves as the catalytic Proton donor. The active-site Proton donor; for beta-elimination activity is Lys-60. DNA contacts are provided by His-108, Arg-136, and Arg-181. The segment at Trp-266 to Lys-300 adopts an FPG-type zinc-finger fold. Arg-290 (proton donor; for delta-elimination activity) is an active-site residue.

The protein belongs to the FPG family. Monomer. It depends on Zn(2+) as a cofactor.

It catalyses the reaction Hydrolysis of DNA containing ring-opened 7-methylguanine residues, releasing 2,6-diamino-4-hydroxy-5-(N-methyl)formamidopyrimidine.. The enzyme catalyses 2'-deoxyribonucleotide-(2'-deoxyribose 5'-phosphate)-2'-deoxyribonucleotide-DNA = a 3'-end 2'-deoxyribonucleotide-(2,3-dehydro-2,3-deoxyribose 5'-phosphate)-DNA + a 5'-end 5'-phospho-2'-deoxyribonucleoside-DNA + H(+). In terms of biological role, involved in base excision repair of DNA damaged by oxidation or by mutagenic agents. Acts as a DNA glycosylase that recognizes and removes damaged bases. Has a preference for oxidized purines, such as 7,8-dihydro-8-oxoguanine (8-oxoG). Has AP (apurinic/apyrimidinic) lyase activity and introduces nicks in the DNA strand. Cleaves the DNA backbone by beta-delta elimination to generate a single-strand break at the site of the removed base with both 3'- and 5'-phosphates. This chain is Formamidopyrimidine-DNA glycosylase, found in Trichodesmium erythraeum (strain IMS101).